We begin with the raw amino-acid sequence, 366 residues long: Putative transcription factor PHD1 (366 aa).

The 107-residue stretch at 186–292 (RVITTMWEDE…KDIESIVDAR (107 aa)) folds into the HTH APSES-type domain. Residues 220 to 241 (GTKLLNVTKMTRGRRDGILRSE) constitute a DNA-binding region (H-T-H motif). A disordered region spans residues 294 to 366 (PSNKASLTPK…QTSRAKNELS (73 aa)). Residues 312-328 (EPSDNKHEIATEIKPKS) are compositionally biased toward basic and acidic residues.

The protein belongs to the EFG1/PHD1/stuA family.

The protein resides in the nucleus. In terms of biological role, putative transcription factor that functions in pseudohyphal growth. The chain is Putative transcription factor PHD1 (PHD1) from Saccharomyces cerevisiae (strain ATCC 204508 / S288c) (Baker's yeast).